The following is a 143-amino-acid chain: Large ribosomal subunit protein uL11 (143 aa).

It belongs to the universal ribosomal protein uL11 family. Part of the ribosomal stalk of the 50S ribosomal subunit. Interacts with L10 and the large rRNA to form the base of the stalk. L10 forms an elongated spine to which L12 dimers bind in a sequential fashion forming a multimeric L10(L12)X complex. Post-translationally, one or more lysine residues are methylated.

Its function is as follows. Forms part of the ribosomal stalk which helps the ribosome interact with GTP-bound translation factors. The protein is Large ribosomal subunit protein uL11 of Paracidovorax citrulli (strain AAC00-1) (Acidovorax citrulli).